The following is a 467-amino-acid chain: Fumarate hydratase class II (467 aa).

Residues 99-101 (SGT), 130-133 (HPND), 140-142 (SSN), and Thr-188 each bind substrate. His-189 serves as the catalytic Proton donor/acceptor. Residue Ser-319 is part of the active site. Residues Ser-320 and 325–327 (KVN) each bind substrate.

Belongs to the class-II fumarase/aspartase family. Fumarase subfamily. As to quaternary structure, homotetramer.

The protein localises to the cytoplasm. The catalysed reaction is (S)-malate = fumarate + H2O. It functions in the pathway carbohydrate metabolism; tricarboxylic acid cycle; (S)-malate from fumarate: step 1/1. Functionally, involved in the TCA cycle. Catalyzes the stereospecific interconversion of fumarate to L-malate. In Thermosynechococcus vestitus (strain NIES-2133 / IAM M-273 / BP-1), this protein is Fumarate hydratase class II.